We begin with the raw amino-acid sequence, 651 residues long: LEAF RUST 10 DISEASE-RESISTANCE LOCUS RECEPTOR-LIKE PROTEIN KINASE-like 1.2 (651 aa).

The first 26 residues, 1–26 (MNPSTPSLLYTSIFFYFTIIATQTLS), serve as a signal peptide directing secretion. The Extracellular segment spans residues 27-264 (LDPKFKACEP…NDKRRRVIVK (238 aa)). 7 N-linked (GlcNAc...) asparagine glycosylation sites follow: Asn88, Asn114, Asn130, Asn136, Asn155, Asn193, and Asn213. A helical transmembrane segment spans residues 265–285 (VLIGASAAVVGLIAASIFWYV). Over 286 to 651 (YHRRKTKSYR…DSVIVKWDSK (366 aa)) the chain is Cytoplasmic. The region spanning 341–613 (FDPSKELGDG…PCMSHVQDTL (273 aa)) is the Protein kinase domain. ATP is bound by residues 347–355 (LGDGGFGTV) and Lys369. Tyr415 bears the Phosphotyrosine mark. Catalysis depends on Asp465, which acts as the Proton acceptor. Ser498 bears the Phosphoserine mark. 2 positions are modified to phosphothreonine: Thr499 and Thr504. Tyr512 bears the Phosphotyrosine mark.

This sequence belongs to the protein kinase superfamily. Ser/Thr protein kinase family.

Its subcellular location is the cell membrane. The protein localises to the membrane. It carries out the reaction L-seryl-[protein] + ATP = O-phospho-L-seryl-[protein] + ADP + H(+). It catalyses the reaction L-threonyl-[protein] + ATP = O-phospho-L-threonyl-[protein] + ADP + H(+). Functionally, probable receptor-like serine/threonine-protein kinase involved in abscisic acid (ABA) signaling. Acts as a positive regulator of abiotic stress response. The polypeptide is LEAF RUST 10 DISEASE-RESISTANCE LOCUS RECEPTOR-LIKE PROTEIN KINASE-like 1.2 (Arabidopsis thaliana (Mouse-ear cress)).